The sequence spans 66 residues: Large ribosomal subunit protein bL35 (66 aa).

The span at M1 to R26 shows a compositional bias: basic residues. Disordered regions lie at residues M1–Y28 and K36–Q55.

It belongs to the bacterial ribosomal protein bL35 family.

This chain is Large ribosomal subunit protein bL35, found in Macrococcus caseolyticus (strain JCSC5402) (Macrococcoides caseolyticum).